Consider the following 270-residue polypeptide: 4-hydroxy-tetrahydrodipicolinate reductase (270 aa).

Residues 11 to 16 (GAGGRM) and Glu37 each bind NAD(+). Arg38 contacts NADP(+). Residues 101–103 (GTT) and 125–128 (APNM) contribute to the NAD(+) site. His158 serves as the catalytic Proton donor/acceptor. Residue His159 coordinates (S)-2,3,4,5-tetrahydrodipicolinate. Lys162 functions as the Proton donor in the catalytic mechanism. (S)-2,3,4,5-tetrahydrodipicolinate is bound at residue 168–169 (GT).

The protein belongs to the DapB family.

It localises to the cytoplasm. It catalyses the reaction (S)-2,3,4,5-tetrahydrodipicolinate + NAD(+) + H2O = (2S,4S)-4-hydroxy-2,3,4,5-tetrahydrodipicolinate + NADH + H(+). The catalysed reaction is (S)-2,3,4,5-tetrahydrodipicolinate + NADP(+) + H2O = (2S,4S)-4-hydroxy-2,3,4,5-tetrahydrodipicolinate + NADPH + H(+). The protein operates within amino-acid biosynthesis; L-lysine biosynthesis via DAP pathway; (S)-tetrahydrodipicolinate from L-aspartate: step 4/4. In terms of biological role, catalyzes the conversion of 4-hydroxy-tetrahydrodipicolinate (HTPA) to tetrahydrodipicolinate. This chain is 4-hydroxy-tetrahydrodipicolinate reductase, found in Shewanella baltica (strain OS223).